Reading from the N-terminus, the 317-residue chain is D-aminoacyl-tRNA deacylase (317 aa).

Belongs to the DtdA deacylase family. It depends on Zn(2+) as a cofactor. Ubiquitous.

Its subcellular location is the nucleus. It localises to the cytoplasm. The catalysed reaction is a D-aminoacyl-tRNA + H2O = a tRNA + a D-alpha-amino acid + H(+). The enzyme catalyses glycyl-tRNA(Ala) + H2O = tRNA(Ala) + glycine + H(+). In terms of biological role, hydrolyzes D-aminoacyl-tRNA into D-amino acid and free tRNA. Broad specificity toward the amino acid, but strict specificity toward the D-isomer. Seems to be required for ethanol tolerance. In Arabidopsis thaliana (Mouse-ear cress), this protein is D-aminoacyl-tRNA deacylase (GEK1).